The chain runs to 365 residues: Caffeic acid 3-O-methyltransferase (365 aa).

Asparagine 131 contributes to the (E)-ferulate binding site. S-adenosyl-L-homocysteine-binding residues include glycine 208, aspartate 231, aspartate 251, methionine 252, methionine 264, and lysine 265. Residue histidine 269 is the Proton acceptor of the active site. Aspartate 270 contacts (E)-5-hydroxyferulate. Active-site residues include glutamate 297 and glutamate 329.

This sequence belongs to the class I-like SAM-binding methyltransferase superfamily. Cation-independent O-methyltransferase family. COMT subfamily. As to quaternary structure, homodimer. In terms of tissue distribution, more abundant in roots and stems.

The enzyme catalyses (E)-caffeate + S-adenosyl-L-methionine = (E)-ferulate + S-adenosyl-L-homocysteine + H(+). It carries out the reaction (E)-5-hydroxyferulate + S-adenosyl-L-methionine = (E)-sinapate + S-adenosyl-L-homocysteine + H(+). Its pathway is aromatic compound metabolism; phenylpropanoid biosynthesis. In terms of biological role, catalyzes the conversion of caffeic acid to ferulic acid and of 5-hydroxyferulic acid to sinapic acid. The resulting products may subsequently be converted to the corresponding alcohols that are incorporated into lignins. This chain is Caffeic acid 3-O-methyltransferase, found in Medicago sativa (Alfalfa).